The following is a 585-amino-acid chain: ATP-dependent lipid A-core flippase (585 aa).

Helical transmembrane passes span 16-36, 66-86, 156-176, 252-272, and 278-298; these read LWPY…ALII, FLSM…ASGF, IIGL…ILLV, AIAN…VLVL, and LRAE…FGLM. In terms of domain architecture, ABC transmembrane type-1 spans 29-313; the sequence is VAVVALIINA…LTNVTSQFQR (285 aa). The ABC transporter domain occupies 345–581; that stretch reads IQVKNVTFTY…DGAYAQLHRI (237 aa). Residue 379–386 participates in ATP binding; that stretch reads GRSGSGKS.

This sequence belongs to the ABC transporter superfamily. Lipid exporter (TC 3.A.1.106) family. As to quaternary structure, homodimer.

Its subcellular location is the cell inner membrane. It catalyses the reaction ATP + H2O + lipid A-core oligosaccharideSide 1 = ADP + phosphate + lipid A-core oligosaccharideSide 2.. Involved in lipopolysaccharide (LPS) biosynthesis. Translocates lipid A-core from the inner to the outer leaflet of the inner membrane. Transmembrane domains (TMD) form a pore in the inner membrane and the ATP-binding domain (NBD) is responsible for energy generation. In Photobacterium profundum (strain SS9), this protein is ATP-dependent lipid A-core flippase.